Reading from the N-terminus, the 584-residue chain is Gag-Pro polyprotein (584 aa).

Residue Gly2 is the site of N-myristoyl glycine; by host attachment. Residues 95–116 (EAPPSAPLAEDPQKPPPYPEQA) form a disordered region. The PTAP/PSAP motif motif lies at 98–101 (PSAP). Positions 109 to 112 (PPPY) match the PPXY motif motif. 2 CCHC-type zinc fingers span residues 349-366 (QPCFRCGQVGHWSRDCKQ) and 372-389 (GPCPVCQDPTHWKRDCPQ). A Peptidase A2 domain is found at 457–535 (VQALLDTGAD…NQWTILGRDA (79 aa)). The For protease activity; shared with dimeric partner role is filled by Asp462.

As to quaternary structure, interacts with human TSG101. This interaction is essential for budding and release of viral particles. In terms of processing, specific enzymatic cleavages by the viral protease yield mature proteins. The polyprotein is cleaved during and after budding, this process is termed maturation. The protease is autoproteolytically processed at its N- and C-termini.

It localises to the virion. Functionally, matrix protein p19 targets Gag, Gag-Pro and Gag-Pro-Pol polyproteins to the plasma membrane via a multipartite membrane binding signal, that includes its myristoylated N-terminus. Also mediates nuclear localization of the preintegration complex. In terms of biological role, capsid protein p24 forms the conical core of the virus that encapsulates the genomic RNA-nucleocapsid complex. Its function is as follows. Nucleocapsid protein p15 is involved in the packaging and encapsidation of two copies of the genome. The aspartyl protease mediates proteolytic cleavages of Gag, Gag-Pro and Gag-Pro-Pol polyproteins during or shortly after the release of the virion from the plasma membrane. Cleavages take place as an ordered, step-wise cascade to yield mature proteins. This process is called maturation. Displays maximal activity during the budding process just prior to particle release from the cell. Hydrolyzes host EIF4GI in order to shut off the capped cellular mRNA translation. The resulting inhibition of cellular protein synthesis serves to ensure maximal viral gene expression and to evade host immune response. The polypeptide is Gag-Pro polyprotein (gag-pro) (Homo sapiens (Human)).